The sequence spans 128 residues: Small ribosomal subunit protein uS8c (128 aa).

This sequence belongs to the universal ribosomal protein uS8 family. In terms of assembly, part of the 30S ribosomal subunit.

It is found in the plastid. Its subcellular location is the chloroplast. Its function is as follows. One of the primary rRNA binding proteins, it binds directly to 16S rRNA central domain where it helps coordinate assembly of the platform of the 30S subunit. This Gnetum parvifolium (Small-leaved jointfir) protein is Small ribosomal subunit protein uS8c (rps8).